The sequence spans 860 residues: GPI ethanolamine phosphate transferase 2 (860 aa).

2 N-linked (GlcNAc...) asparagine glycosylation sites follow: asparagine 123 and asparagine 180. 8 helical membrane-spanning segments follow: residues 408–428 (LGGI…FSAL), 438–458 (LYLI…TVEE), 459–479 (EHQI…ISGS), 487–506 (FNWM…NQTG), 524–544 (NHPV…NKVW), 555–575 (LAFL…ITQA), 576–596 (WEAG…PGTL), and 639–659 (AFLT…LFMV). The N-linked (GlcNAc...) asparagine glycan is linked to asparagine 672. Transmembrane regions (helical) follow at residues 692-712 (LVLV…FSMG), 736-756 (FVGV…STAG), 795-815 (VYVV…TCFF), and 834-854 (FVWT…IFVV).

Belongs to the PIGG/PIGN/PIGO family. PIGG subfamily.

The protein localises to the endoplasmic reticulum membrane. It participates in glycolipid biosynthesis; glycosylphosphatidylinositol-anchor biosynthesis. Functionally, ethanolamine phosphate transferase involved in glycosylphosphatidylinositol-anchor biosynthesis. Transfers ethanolamine phosphate to the GPI second mannose. This chain is GPI ethanolamine phosphate transferase 2 (LAS21), found in Yarrowia lipolytica (strain CLIB 122 / E 150) (Yeast).